Consider the following 610-residue polypeptide: Transcription termination factor Rho (610 aa).

Residues 117–227 form a disordered region; that stretch reads EVSRRERRGA…GDGAEAELRQ (111 aa). The segment covering 118–131 has biased composition (basic and acidic residues); the sequence is VSRRERRGASREAD. The span at 178-187 shows a compositional bias: polar residues; the sequence is GVEQQSSSLQ. Positions 189–198 are enriched in basic and acidic residues; it reads RGDDDGEGRQ. The span at 199 to 214 shows a compositional bias: basic residues; sequence GRRGRRFRDRDRRRRG. Residues 215–227 are compositionally biased toward basic and acidic residues; the sequence is ERSGDGAEAELRQ. The region spanning 231–309 is the Rho RNA-BD domain; the sequence is VQPVAGILDV…VRLDSINGGS (79 aa). ATP contacts are provided by residues 352-357, 364-369, and Arg-395; these read GKGQRA and KAGKTT.

The protein belongs to the Rho family. In terms of assembly, homohexamer. The homohexamer assembles into an open ring structure.

Facilitates transcription termination by a mechanism that involves Rho binding to the nascent RNA, activation of Rho's RNA-dependent ATPase activity, and release of the mRNA from the DNA template. The polypeptide is Transcription termination factor Rho (Mycobacterium leprae (strain TN)).